We begin with the raw amino-acid sequence, 339 residues long: tRNA N6-adenosine threonylcarbamoyltransferase (339 aa).

The Fe cation site is built by His-111 and His-115. Substrate contacts are provided by residues 139–143 (LVSGG), Asp-172, Gly-185, Asp-189, and Asn-280. Asp-308 is a binding site for Fe cation.

Belongs to the KAE1 / TsaD family. Fe(2+) is required as a cofactor.

Its subcellular location is the cytoplasm. The enzyme catalyses L-threonylcarbamoyladenylate + adenosine(37) in tRNA = N(6)-L-threonylcarbamoyladenosine(37) in tRNA + AMP + H(+). Functionally, required for the formation of a threonylcarbamoyl group on adenosine at position 37 (t(6)A37) in tRNAs that read codons beginning with adenine. Is involved in the transfer of the threonylcarbamoyl moiety of threonylcarbamoyl-AMP (TC-AMP) to the N6 group of A37, together with TsaE and TsaB. TsaD likely plays a direct catalytic role in this reaction. The protein is tRNA N6-adenosine threonylcarbamoyltransferase of Bacteroides fragilis (strain ATCC 25285 / DSM 2151 / CCUG 4856 / JCM 11019 / LMG 10263 / NCTC 9343 / Onslow / VPI 2553 / EN-2).